An 87-amino-acid chain; its full sequence is DNA-directed RNA polymerase subunit omega (87 aa).

Belongs to the RNA polymerase subunit omega family. In terms of assembly, the RNAP catalytic core consists of 2 alpha, 1 beta, 1 beta' and 1 omega subunit. When a sigma factor is associated with the core the holoenzyme is formed, which can initiate transcription.

It catalyses the reaction RNA(n) + a ribonucleoside 5'-triphosphate = RNA(n+1) + diphosphate. Promotes RNA polymerase assembly. Latches the N- and C-terminal regions of the beta' subunit thereby facilitating its interaction with the beta and alpha subunits. In Pseudomonas savastanoi pv. phaseolicola (strain 1448A / Race 6) (Pseudomonas syringae pv. phaseolicola (strain 1448A / Race 6)), this protein is DNA-directed RNA polymerase subunit omega.